A 320-amino-acid chain; its full sequence is Acetyl-coenzyme A carboxylase carboxyl transferase subunit beta (320 aa).

The 270-residue stretch at 25-294 folds into the CoA carboxyltransferase N-terminal domain; it reads VWTKCDSCGQ…AKDEDELLGE (270 aa). The Zn(2+) site is built by Cys29, Cys32, Cys48, and Cys51. A C4-type zinc finger spans residues 29–51; it reads CDSCGQVLYRAELERNLEVCPKC. Residues 295-310 are compositionally biased toward acidic residues; the sequence is EMIADDIESSDNEPEI. Residues 295-320 are disordered; that stretch reads EMIADDIESSDNEPEINIETNKKEDV.

The protein belongs to the AccD/PCCB family. Acetyl-CoA carboxylase is a heterohexamer composed of biotin carboxyl carrier protein (AccB), biotin carboxylase (AccC) and two subunits each of ACCase subunit alpha (AccA) and ACCase subunit beta (AccD). Zn(2+) is required as a cofactor.

Its subcellular location is the cytoplasm. The catalysed reaction is N(6)-carboxybiotinyl-L-lysyl-[protein] + acetyl-CoA = N(6)-biotinyl-L-lysyl-[protein] + malonyl-CoA. It participates in lipid metabolism; malonyl-CoA biosynthesis; malonyl-CoA from acetyl-CoA: step 1/1. Its function is as follows. Component of the acetyl coenzyme A carboxylase (ACC) complex. Biotin carboxylase (BC) catalyzes the carboxylation of biotin on its carrier protein (BCCP) and then the CO(2) group is transferred by the transcarboxylase to acetyl-CoA to form malonyl-CoA. This Proteus mirabilis (strain HI4320) protein is Acetyl-coenzyme A carboxylase carboxyl transferase subunit beta.